Reading from the N-terminus, the 376-residue chain is Flagellin B (376 aa).

Positions 103–129 (SNSSSERRAIQEEVSALNDELNRIAET) form a coiled coil.

Belongs to the bacterial flagellin family. Heteromer of multiple flagellin subunits including FlaA, FlaB, FlaC, FlaD and FlaE.

Its subcellular location is the secreted. It localises to the bacterial flagellum. Flagellin is the subunit protein which polymerizes to form the filaments of bacterial flagella. FlaB is not essential for flagellar synthesis and motility. The polypeptide is Flagellin B (flaB) (Vibrio cholerae serotype O1 (strain ATCC 39541 / Classical Ogawa 395 / O395)).